The following is a 622-amino-acid chain: Low affinity potassium transport system protein Kup (622 aa).

12 helical membrane-spanning segments follow: residues 9–29 (LPALTLAAIGVVYGDIGTSPL), 49–69 (VFGFLSLIFWLLIFTVSIKYI), 101–121 (VLVILGLIGGSFFYGEVVITP), 137–157 (PQLDTWIVPISIIVLTLLFVI), 163–183 (GMVGKLFAPIMLIWFLLLAVL), 213–233 (VSFIALGAVVLSITGVEALYA), 247–267 (WFSVVLPSLVLNYFGQGALLL), 276–296 (PFFLLAPEWALIPMLIIATLA), 337–357 (IYIPFINWLLYVSVVIVIVSF), 363–383 (LAAAYGIAVTGTMVLTSILSA), 395–415 (LFVGLMLVAFLCIDIPLFSAN), and 419–439 (IVSGGWLPLSLGMVMFTVMTT).

It belongs to the HAK/KUP transporter (TC 2.A.72) family.

Its subcellular location is the cell inner membrane. It carries out the reaction K(+)(in) + H(+)(in) = K(+)(out) + H(+)(out). Functionally, responsible for the low-affinity transport of potassium into the cell. Likely operates as a K(+):H(+) symporter. The polypeptide is Low affinity potassium transport system protein Kup (Klebsiella pneumoniae subsp. pneumoniae (strain ATCC 700721 / MGH 78578)).